A 168-amino-acid polypeptide reads, in one-letter code: Transcriptional repressor NrdR (168 aa).

The segment at 3-34 (CPYCGFAQDRVVDSRESKEADSIRRRRECERC) is a zinc-finger region. The 91-residue stretch at 49–139 (YMVVKKDGRR…VYRDFKDVNE (91 aa)) folds into the ATP-cone domain.

It belongs to the NrdR family. Requires Zn(2+) as cofactor.

Negatively regulates transcription of bacterial ribonucleotide reductase nrd genes and operons by binding to NrdR-boxes. This is Transcriptional repressor NrdR from Acidobacterium capsulatum (strain ATCC 51196 / DSM 11244 / BCRC 80197 / JCM 7670 / NBRC 15755 / NCIMB 13165 / 161).